Reading from the N-terminus, the 349-residue chain is uncharacterized protein (349 aa).

A helical membrane pass occupies residues 16 to 36 (LVITIISTGLIFGMTLVLTGL). The disordered stretch occupies residues 111–139 (FGAPEHGPGMPRVSEGRSPSKPDEVAASS). Basic and acidic residues predominate over residues 124–134 (SEGRSPSKPDE). 3 helical membrane passes run 231 to 251 (ISIV…SVVY), 284 to 304 (VIAL…APLF), and 307 to 327 (IVAV…VIGL).

It belongs to the ABC-4 integral membrane protein family. The complex is composed of two ATP-binding proteins (MT0079), two transmembrane proteins (MT0078) and a solute-binding protein.

Its subcellular location is the cell membrane. In terms of biological role, probably part of an ABC transporter complex. Probably responsible for the translocation of the substrate across the membrane. This is an uncharacterized protein from Mycobacterium tuberculosis (strain CDC 1551 / Oshkosh).